The primary structure comprises 360 residues: Phospho-N-acetylmuramoyl-pentapeptide-transferase (360 aa).

The next 10 helical transmembrane spans lie at 26–46 (AVLSLLTALLLSLWIGPKMIL), 73–93 (TMGGIMILATITASSLLWGDL), 94–114 (SNPYIWCSLFVLLGYGAIGFV), 132–152 (WKYFWLSVVAFIAVFTMYMIG), 168–188 (IMPQLGLFYIVLAYFVIVGTS), 199–219 (GLAIMPTVFVAGAFAIIAWAT), 239–259 (LVIFCTAIVGAGLGFLWFNTY), 263–283 (VFMGDVGSLALGGALGVIAVL), 288–308 (FLLVIMGGVFVMETVSVILQV), and 338–358 (VIIRFWIISLMLVLLGLVTLK).

The protein belongs to the glycosyltransferase 4 family. MraY subfamily. It depends on Mg(2+) as a cofactor.

The protein resides in the cell inner membrane. The enzyme catalyses UDP-N-acetyl-alpha-D-muramoyl-L-alanyl-gamma-D-glutamyl-meso-2,6-diaminopimeloyl-D-alanyl-D-alanine + di-trans,octa-cis-undecaprenyl phosphate = di-trans,octa-cis-undecaprenyl diphospho-N-acetyl-alpha-D-muramoyl-L-alanyl-D-glutamyl-meso-2,6-diaminopimeloyl-D-alanyl-D-alanine + UMP. It functions in the pathway cell wall biogenesis; peptidoglycan biosynthesis. Catalyzes the initial step of the lipid cycle reactions in the biosynthesis of the cell wall peptidoglycan: transfers peptidoglycan precursor phospho-MurNAc-pentapeptide from UDP-MurNAc-pentapeptide onto the lipid carrier undecaprenyl phosphate, yielding undecaprenyl-pyrophosphoryl-MurNAc-pentapeptide, known as lipid I. This chain is Phospho-N-acetylmuramoyl-pentapeptide-transferase, found in Actinobacillus succinogenes (strain ATCC 55618 / DSM 22257 / CCUG 43843 / 130Z).